A 194-amino-acid polypeptide reads, in one-letter code: WASH complex subunit 3 (194 aa).

Met-1 is modified (N-acetylmethionine). Residues 46–74 (AVCEEKLADLSLRIQQIETTLNILDAKLS) adopt a coiled-coil conformation. 2 disordered regions span residues 94–126 (VTNG…PSEN) and 158–194 (SEGL…SFSD). A compositionally biased stretch (low complexity) spans 98–113 (SHSETTSEQTQQNSTQ). The span at 114-126 (DSGAQESEAPSEN) shows a compositional bias: polar residues.

It belongs to the CCDC53 family. Component of the WASH core complex also described as WASH regulatory complex (SHRC) composed of WASHC1, WASHC2, WASHC3, WASHC4 and WASHC5. The WASH core complex associates via WASHC2 with the F-actin-capping protein dimer (formed by CAPZA1, CAPZA2 or CAPZA3 and CAPZB) in a transient or substoichiometric manner which was initially described as WASH complex.

The protein localises to the early endosome. In terms of biological role, acts as a component of the WASH core complex that functions as a nucleation-promoting factor (NPF) at the surface of endosomes, where it recruits and activates the Arp2/3 complex to induce actin polymerization, playing a key role in the fission of tubules that serve as transport intermediates during endosome sortingg. The sequence is that of WASH complex subunit 3 from Mus musculus (Mouse).